A 302-amino-acid chain; its full sequence is m7GpppN-mRNA hydrolase NUDT17 (302 aa).

The 149-residue stretch at G89–P237 folds into the Nudix hydrolase domain. The Nudix box motif lies at G128–G149. Mg(2+) is bound by residues E143 and E147.

It belongs to the Nudix hydrolase family. Mg(2+) serves as cofactor. It depends on Mn(2+) as a cofactor.

The enzyme catalyses a 5'-end (N(7)-methyl 5'-triphosphoguanosine)-ribonucleoside in mRNA + H2O = N(7)-methyl-GDP + a 5'-end phospho-ribonucleoside in mRNA + 2 H(+). In terms of biological role, acts as a decapping enzyme capable of hydrolyzing monomethylated capped RNAs (in vitro). Hydrolyzes monomethylated capped RNA after alpha and beta phosphates to form N(7)-methyl-GDP. Shows low activity towards unmethylated capped RNA. This Bos taurus (Bovine) protein is m7GpppN-mRNA hydrolase NUDT17 (NUDT17).